The sequence spans 1202 residues: DNA-directed RNA polymerase subunit beta (1202 aa).

Belongs to the RNA polymerase beta chain family. The RNAP catalytic core consists of 2 alpha, 1 beta, 1 beta' and 1 omega subunit. When a sigma factor is associated with the core the holoenzyme is formed, which can initiate transcription.

It catalyses the reaction RNA(n) + a ribonucleoside 5'-triphosphate = RNA(n+1) + diphosphate. In terms of biological role, DNA-dependent RNA polymerase catalyzes the transcription of DNA into RNA using the four ribonucleoside triphosphates as substrates. The sequence is that of DNA-directed RNA polymerase subunit beta from Mycoplasmopsis synoviae (strain 53) (Mycoplasma synoviae).